We begin with the raw amino-acid sequence, 1370 residues long: Zinc finger MYM-type protein 3 (1370 aa).

Low complexity-rich tracts occupy residues 1 to 12, 40 to 56, and 130 to 146; these read MDPSDFPSPFDP, APSR…SSGA, and GAGA…EPLA. Disordered stretches follow at residues 1–73 and 85–310; these read MDPS…PGGV and GLLY…MGTK. Positions 227–255 are enriched in basic and acidic residues; that stretch reads TGKEIEKPPERVQKRSERVRRAEPPKPEV. Residues Ser265 and Ser269 each carry the phosphoserine modification. Over residues 265 to 281 the composition is skewed to acidic residues; sequence SDEDSDAMVDDPNDEDF. Glycyl lysine isopeptide (Lys-Gly) (interchain with G-Cter in SUMO2) cross-links involve residues Lys310, Lys322, and Lys330. 9 consecutive MYM-type zinc fingers follow at residues 334-368, 380-424, 431-466, 479-513, 523-561, 569-606, 614-648, 655-694, and 701-735; these read QLFC…TKDS, HEFC…LHEV, HRLC…RPGG, KRFC…FEML, SLFC…PCYY, YQFC…KPEV, FQFC…HEKL, KSFC…GVTE, and WDFC…LETI. The segment covering 761-789 has biased composition (polar residues); the sequence is NLDTQSGPESLLNSQSSESKPQTPSQTKV. The segment at 761 to 831 is disordered; that stretch reads NLDTQSGPES…PPPPATPRKN (71 aa). Glycyl lysine isopeptide (Lys-Gly) (interchain with G-Cter in SUMO2) cross-links involve residues Lys780 and Lys788. Basic and acidic residues predominate over residues 790 to 799; it reads ENNHTVRTPD. Phosphothreonine is present on Thr797. Residue Lys806 forms a Glycyl lysine isopeptide (Lys-Gly) (interchain with G-Cter in SUMO2) linkage. Pro residues predominate over residues 816-827; that stretch reads VPTPPPPPPPAT. A phosphothreonine mark is found at Thr818 and Thr827. Residues Lys848, Lys862, Lys921, and Lys1276 each participate in a glycyl lysine isopeptide (Lys-Gly) (interchain with G-Cter in SUMO2) cross-link.

As to quaternary structure, may be a component of a BHC histone deacetylase complex that contains HDAC1, HDAC2, HMG20B/BRAF35, KDM1A, RCOR1/CoREST, PHF21A/BHC80, ZMYM2, ZNF217, ZMYM3, GSE1 and GTF2I. As to expression, ubiquitously expressed in all embryonic stages and adult tissues.

It is found in the nucleus. Plays a role in the regulation of cell morphology and cytoskeletal organization. The chain is Zinc finger MYM-type protein 3 (Zmym3) from Mus musculus (Mouse).